We begin with the raw amino-acid sequence, 239 residues long: Ribosomal RNA small subunit methyltransferase G (239 aa).

Residues Gly77, Phe82, 128–129 (AE), and Arg147 each bind S-adenosyl-L-methionine.

Belongs to the methyltransferase superfamily. RNA methyltransferase RsmG family.

It localises to the cytoplasm. Its function is as follows. Specifically methylates the N7 position of guanine in position 535 of 16S rRNA. The protein is Ribosomal RNA small subunit methyltransferase G of Bacillus mycoides (strain KBAB4) (Bacillus weihenstephanensis).